The following is a 497-amino-acid chain: Serine/threonine-protein phosphatase 2A 56 kDa regulatory subunit beta isoform (497 aa).

The span at 1–19 (METKLPPASTPTSPSSPGL) shows a compositional bias: low complexity. 2 disordered regions span residues 1 to 55 (METK…YQSN) and 473 to 497 (QGTQGAKEAPVPRPTPQVAASGGQS). A phosphoserine mark is found at Ser32, Ser35, Ser44, Ser46, Ser47, and Ser48. Basic residues predominate over residues 34–45 (RSLRRARPRRSH).

Belongs to the phosphatase 2A regulatory subunit B56 family. As to quaternary structure, component of the serine/threonine-protein phosphatase 2A complex (PP2A). This complex consists of a common heterodimeric core enzyme, composed of a 36 kDa catalytic subunit (subunit C) and a 65 kDa constant scaffold subunit (PR65 or subunit A), that associates with a variety of regulatory subunits. Proteins that associate with the core dimer include three families of regulatory subunits B (the R2/B/PR55/B55, R3/B''/PR72/PR130/PR59 and R5/B'/B56 families), the 48 kDa variable regulatory subunit, viral proteins, and cell signaling molecules. Interacts with SGO1. Interacts with AKT1. In terms of processing, ubiquitinated by CUL3-KLHL15 complex; this modification leads to proteasomal degradation.

Its subcellular location is the cytoplasm. Its function is as follows. As the regulatory component of the serine/threonine-protein phosphatase 2A (PP2A) holoenzyme, modulates substrate specificity, subcellular localization, and responsiveness to phosphorylation. The phosphorylated form mediates the interaction between PP2A and AKT1, leading to AKT1 dephosphorylation. In Mus musculus (Mouse), this protein is Serine/threonine-protein phosphatase 2A 56 kDa regulatory subunit beta isoform (Ppp2r5b).